A 77-amino-acid chain; its full sequence is Serine protease inhibitor 2 (77 aa).

The first 17 residues, 1-17 (MMFTPLIVLTLLVLATA), serve as a signal peptide directing secretion. 5 disulfide bridges follow: C21–C53, C30–C48, C33–C44, C37–C74, and C55–C68. Positions 21–74 (CGPNEQWSDCPKCELQCGESDKPCATICGEPKCYCSPDKYRRIPDGRCIRKIQC) constitute a TIL domain.

The protein resides in the secreted. In terms of biological role, defends the organism against the host's proteinases. The polypeptide is Serine protease inhibitor 2 (Anisakis simplex (Herring worm)).